Here is a 557-residue protein sequence, read N- to C-terminus: MRSDEIKKGIERAPHRSLLRACGLKEEDFGKPFIGIANSYIDIIPGHVHLQEFAKIVKEAIREAGGVPFEFNVIGVDDGIAMGHSGMFYSLPSRELIADSVETVVQAHKLDGLVLIPNCDKIVPGMIMAAARVNIPTILVSGGPMAAGHTSDGKPIDLATVFEAVGGIKKGLIDEKQLIDIETHACPTCGSCSGMFTANSMNCLAEALGIALPGNGSILAIDPRRKELAKQAGRQIVELVKAGLKFRDIVNQETIENAFTLDIAMGGSSNTVLHLLAISHEAGIEFPMEKIDEISRKTPTLCKLAPASQYHMEDLDKAGGIYAILKELSKKNLLHLDRPTVLMKTIGEAIKDAEIKDTNVIRPLENPYNETGGLAVLFGNLAPDGAVVKAAAVDPKILVHRGTAVVFDSEEEAIEGITNGKVKEGNVVVIRYEGPKGGPGMREMLAPTSTIMGMGLGDKVSLITDGRFSGATRGACIGHVSPEAAAGGPIGIVQNGDEILIDIPNRKIELLISEQEFERRMKEFKPKKKEIPSPWLRRYSKFVTSANKGAILSDECS.

Residue Asp78 coordinates Mg(2+). [2Fe-2S] cluster is bound at residue Cys119. The Mg(2+) site is built by Asp120 and Lys121. Lys121 is modified (N6-carboxylysine). Cys192 is a binding site for [2Fe-2S] cluster. Residue Glu443 coordinates Mg(2+). Ser469 acts as the Proton acceptor in catalysis.

This sequence belongs to the IlvD/Edd family. In terms of assembly, homodimer. Requires [2Fe-2S] cluster as cofactor. The cofactor is Mg(2+).

It carries out the reaction (2R)-2,3-dihydroxy-3-methylbutanoate = 3-methyl-2-oxobutanoate + H2O. The catalysed reaction is (2R,3R)-2,3-dihydroxy-3-methylpentanoate = (S)-3-methyl-2-oxopentanoate + H2O. Its pathway is amino-acid biosynthesis; L-isoleucine biosynthesis; L-isoleucine from 2-oxobutanoate: step 3/4. The protein operates within amino-acid biosynthesis; L-valine biosynthesis; L-valine from pyruvate: step 3/4. In terms of biological role, functions in the biosynthesis of branched-chain amino acids. Catalyzes the dehydration of (2R,3R)-2,3-dihydroxy-3-methylpentanoate (2,3-dihydroxy-3-methylvalerate) into 2-oxo-3-methylpentanoate (2-oxo-3-methylvalerate) and of (2R)-2,3-dihydroxy-3-methylbutanoate (2,3-dihydroxyisovalerate) into 2-oxo-3-methylbutanoate (2-oxoisovalerate), the penultimate precursor to L-isoleucine and L-valine, respectively. In Sulfurihydrogenibium sp. (strain YO3AOP1), this protein is Dihydroxy-acid dehydratase.